The primary structure comprises 713 residues: Serine/threonine-protein kinase SSN3 (713 aa).

Positions Tyr-66 to Phe-484 constitute a Protein kinase domain. Position 72 to 80 (Leu-72 to Val-80) interacts with ATP. Over residues Asn-104–Thr-120 the composition is skewed to low complexity. A disordered region spans residues Asn-104–Ser-188. Residues Gln-129–His-142 show a composition bias toward polar residues. Low complexity predominate over residues Gly-158–Ala-175. Lys-201 is an ATP binding site. The active-site Proton acceptor is Asp-304. Positions Ser-657–Glu-672 are enriched in polar residues. A disordered region spans residues Ser-657 to Asn-713. Over residues Ser-673–Pro-691 the composition is skewed to low complexity. The span at Arg-694–Asn-705 shows a compositional bias: polar residues.

Belongs to the protein kinase superfamily. CMGC Ser/Thr protein kinase family. CDC2/CDKX subfamily. As to quaternary structure, component of the srb8-11 complex, a regulatory module of the Mediator complex. It depends on Mg(2+) as a cofactor.

It localises to the nucleus. The enzyme catalyses L-seryl-[protein] + ATP = O-phospho-L-seryl-[protein] + ADP + H(+). The catalysed reaction is L-threonyl-[protein] + ATP = O-phospho-L-threonyl-[protein] + ADP + H(+). It carries out the reaction [DNA-directed RNA polymerase] + ATP = phospho-[DNA-directed RNA polymerase] + ADP + H(+). In terms of biological role, component of the srb8-11 complex. The srb8-11 complex is a regulatory module of the Mediator complex which is itself dependent transcription. The srb8-11 complex may be involved in the transcriptional repression of a subset of genes regulated by Mediator. It may inhibit the association of the Mediator complex with RNA polymerase II to form the holoenzyme complex. The srb8-11 complex phosphorylates the C-terminal domain (CTD) of the largest subunit of RNA polymerase II. The protein is Serine/threonine-protein kinase SSN3 (SSN3) of Mycosarcoma maydis (Corn smut fungus).